A 615-amino-acid polypeptide reads, in one-letter code: Delta(14)-sterol reductase LBR (615 aa).

The 62-residue stretch at 1-62 (MPSRKFADGE…DIKPLTSFRQ (62 aa)) folds into the Tudor domain. At 1–211 (MPSRKFADGE…IRAKDLEFGG (211 aa)) the chain is on the nuclear side. Residues 52 to 109 (NDIKPLTSFRQRKGGSTSSSPSRRRGSRSRSRSRSPGRPPKSARRSASASHQADIKEA) are disordered. Residue lysine 55 is modified to N6-acetyllysine. A Phosphothreonine modification is found at threonine 58. A phosphoserine mark is found at serine 59 and serine 67. A phosphoserine; by CDK1 mark is found at serine 71 and serine 86. Positions 73-86 (SRRRGSRSRSRSRS) are enriched in basic residues. Phosphoserine is present on residues serine 97 and serine 99. Residue threonine 118 is modified to Phosphothreonine. At serine 128 the chain carries Phosphoserine. Threonine 200 is subject to Phosphothreonine. The next 8 membrane-spanning stretches (helical) occupy residues 212–232 (VPGVFLIMFGLPVFLFLLLLM), 258–278 (VFGVYLLWFLIQVLFYLLPIG), 299–319 (FYAFILTSAVIGTSLFQGVEF), 326–346 (FLQFALAATVFCVVLSVYLYM), 386–406 (FCELRPGLIGWVVINLVMLLA), 447–467 (IIHDGFGFMLAFGDLVWVPFI), 481–501 (EVSWPMASLIIVLKLCGYVIF), and 561–581 (PCGFNHILPYFYIIYFTMLLV). Residues lysine 594 and lysine 601 each carry the N6-acetyllysine modification.

This sequence belongs to the ERG4/ERG24 family. As to quaternary structure, interacts with CBX5. Interacts with DNA. Interaction with DNA is sequence independent with higher affinity for supercoiled and relaxed circular DNA than linear DNA. Interacts with lamin B. Interacts with CLNK. Interacts with TMEM147; promoting LBR localization to the nucleus inner membrane. Post-translationally, phosphorylated by CDK1 in mitosis when the inner nuclear membrane breaks down into vesicles that dissociate from the lamina and the chromatin. It is phosphorylated by different protein kinases in interphase when the membrane is associated with these structures. Phosphorylation of LBR and HP1 proteins may be responsible for some of the alterations in chromatin organization and nuclear structure which occur at various times during the cell cycle. Phosphorylated by SRPK1. In late anaphase LBR is dephosphorylated, probably by PP1 and/or PP2A, allowing reassociation with chromatin. In terms of tissue distribution, expressed in the bone marrow, liver, heart, adrenal gland, lung, placenta and uterus. Expressed in osteoclasts and osteoblast-like cells.

It localises to the nucleus inner membrane. The protein resides in the endoplasmic reticulum membrane. The protein localises to the cytoplasm. Its subcellular location is the nucleus. The enzyme catalyses 5alpha-cholest-8,14-dien-3beta-ol + NADPH + H(+) = 5alpha-cholest-8-en-3beta-ol + NADP(+). It carries out the reaction 4,4-dimethyl-5alpha-cholesta-8,24-dien-3beta-ol + NADP(+) = 4,4-dimethyl-5alpha-cholesta-8,14,24-trien-3beta-ol + NADPH + H(+). It catalyses the reaction 4,4-dimethyl-8,14-cholestadien-3beta-ol + NADPH + H(+) = 4,4-dimethyl-5alpha-cholest-8-en-3beta-ol + NADP(+). It functions in the pathway steroid biosynthesis; cholesterol biosynthesis. In terms of biological role, catalyzes the reduction of the C14-unsaturated bond of lanosterol, as part of the metabolic pathway leading to cholesterol biosynthesis. Plays a critical role in myeloid cell cholesterol biosynthesis which is essential to both myeloid cell growth and functional maturation. Mediates the activation of NADPH oxidases, perhaps by maintaining critical levels of cholesterol required for membrane lipid raft formation during neutrophil differentiation. Anchors the lamina and the heterochromatin to the inner nuclear membrane. In Homo sapiens (Human), this protein is Delta(14)-sterol reductase LBR (LBR).